Consider the following 36-residue polypeptide: Cytochrome b6-f complex subunit 7 (36 aa).

The chain crosses the membrane as a helical span at residues 5–25 (IFFVAGLVFVLTLVGMAIGFG).

Belongs to the PetM family. As to quaternary structure, the 4 large subunits of the cytochrome b6-f complex are cytochrome b6, subunit IV (17 kDa polypeptide, PetD), cytochrome f and the Rieske protein, while the 4 small subunits are PetG, PetL, PetM and PetN. The complex functions as a dimer.

Its subcellular location is the cell inner membrane. Component of the cytochrome b6-f complex, which mediates electron transfer between photosystem II (PSII) and photosystem I (PSI), cyclic electron flow around PSI, and state transitions. The protein is Cytochrome b6-f complex subunit 7 of Gloeobacter violaceus (strain ATCC 29082 / PCC 7421).